We begin with the raw amino-acid sequence, 225 residues long: MDFIKGLWRDLRARPVDTLVRWQEQRFLWLLMAIAMGGLIILAHSFFQIYLYMAPCEQCVYIRYAMFVMVIGGVIAAINPKNIVLKLIGCIAAFYGSIMGIKFSIKLNGIHHAVHNADPDSLFGVQGCSTDPTFPFNLPLAEWAPEWFKPTGDCGYDAPIVPDGVTLSSVQQWFVDLYQQSEGWYLLPPWHFMNMAQACMLAFGLCLILLLVMSGAWALKLARGK.

A helical transmembrane segment spans residues 27-47 (FLWLLMAIAMGGLIILAHSFF). A disulfide bond links Cys56 and Cys59. 2 consecutive transmembrane segments (helical) span residues 65–85 (AMFVMVIGGVIAAINPKNIVL) and 87–107 (LIGCIAAFYGSIMGIKFSIKL). A disulfide bridge connects residues Cys128 and Cys154. The chain crosses the membrane as a helical span at residues 199-219 (CMLAFGLCLILLLVMSGAWAL).

Belongs to the DsbB family. DsbI subfamily. In terms of assembly, interacts with DsbL.

It is found in the cell inner membrane. Functionally, required for disulfide bond formation in some proteins. Part of a redox system composed of DsbI and DsbL that mediates formation of an essential disulfide bond in AssT. In Salmonella choleraesuis (strain SC-B67), this protein is Protein-disulfide oxidoreductase DsbI.